We begin with the raw amino-acid sequence, 319 residues long: Exopolyphosphatase 2 (319 aa).

This sequence belongs to the GppA/Ppx family. As to quaternary structure, homodimer.

The catalysed reaction is [phosphate](n) + H2O = [phosphate](n-1) + phosphate + H(+). With respect to regulation, exopolyphosphatase activity is inhibited by ppGpp alarmones produced during the bacterial stringent response. In terms of biological role, degradation of inorganic polyphosphates (polyP). Releases orthophosphate processively from the ends of the polyP chain. Prefers long-chain length polyphosphates as substrates. This chain is Exopolyphosphatase 2, found in Mycobacterium tuberculosis (strain CDC 1551 / Oshkosh).